We begin with the raw amino-acid sequence, 465 residues long: WAS protein family homolog 2 (465 aa).

Residues 1–54 form a required for WASH complex assembly region; sequence MTPVRMQHSLAGQTYAVPLIQPDLRREEAVQQMADALQYLQKVSGDIFSRISQQ. Positions 1–167 are WHD1; the sequence is MTPVRMQHSL…EGLGGLPSNI (167 aa). A Glycyl lysine isopeptide (Lys-Gly) (interchain with G-Cter in ubiquitin) cross-link involves residue Lys-220. Disordered stretches follow at residues 297–407 and 422–465; these read QDGV…QGGH and GISG…DWES. A compositionally biased stretch (pro residues) spans 302–314; it reads TPPPPPPPPPPAP. The tract at residues 349–465 is VCA; it reads QGAPREVVDP…AEEDEDDWES (117 aa). Residues 361–383 enclose the WH2 domain; the sequence is GRATLLESIRQAGGIGKAKLRSM. A compositionally biased stretch (basic and acidic residues) spans 382-398; it reads SMKERKLEKKKQKEQEQ. Positions 424-436 are enriched in gly residues; the sequence is SGKGPGAGEGPGG. Acidic residues predominate over residues 456-465; sequence AEEDEDDWES.

This sequence belongs to the WASH1 family. In terms of assembly, component of the WASH core complex also described as WASH regulatory complex (SHRC) composed of WASH (WASHC1, WASH2P or WASH3P), WASHC2 (WASHC2A or WASHC2C), WASHC3, WASHC4 and WASHC5. The WASH core complex associates with the F-actin-capping protein dimer (formed by CAPZA1, CAPZA2 or CAPZA3 and CAPZB) in a transient or substoichiometric manner which was initially described as WASH complex. Interacts (via WHD1 region) with WASHC2C; the interaction is direct. Interacts with alpha-tubulin. Interacts with BECN1; WASHC1 and AMBRA1 can competitively interact with BECN1. Interacts with BLOC1S2; may associate with the BLOC-1 complex. Interacts with tubulin gamma chain (TUBG1 or TUBG2). Interacts with EXOC1, EXOC4, EXOC8; in MMP14-positive endosomes in breast tumor cells; indicative for an association with the exocyst complex.

It localises to the early endosome membrane. The protein resides in the recycling endosome membrane. The protein localises to the late endosome. Its subcellular location is the cytoplasmic vesicle. It is found in the autophagosome. It localises to the cytoplasm. The protein resides in the cytoskeleton. The protein localises to the microtubule organizing center. Its subcellular location is the centrosome. It is found in the centriole. Acts as a nucleation-promoting factor at the surface of endosomes, where it recruits and activates the Arp2/3 complex to induce actin polymerization, playing a key role in the fission of tubules that serve as transport intermediates during endosome sorting. Involved in endocytic trafficking of EGF. Involved in transferrin receptor recycling. Regulates the trafficking of endosomal alpha5beta1 integrin to the plasma membrane and involved in invasive cell migration. In T-cells involved in endosome-to-membrane recycling of receptors including T-cell receptor (TCR), CD28 and ITGAL; proposed to be implicated in T-cell proliferation and effector function. In dendritic cells involved in endosome-to-membrane recycling of major histocompatibility complex (MHC) class II probably involving retromer and subsequently allowing antigen sampling, loading and presentation during T-cell activation. Involved in Arp2/3 complex-dependent actin assembly driving Salmonella typhimurium invasion independent of ruffling. Involved in the exocytosis of MMP14 leading to matrix remodeling during invasive migration and implicating late endosome-to-plasma membrane tubular connections and cooperation with the exocyst complex. Involved in negative regulation of autophagy independently from its role in endosomal sorting by inhibiting BECN1 ubiquitination to inactivate PIK3C3/Vps34 activity. The chain is WAS protein family homolog 2 (WASH2P) from Homo sapiens (Human).